Consider the following 433-residue polypeptide: UDP-N-acetylglucosamine 1-carboxyvinyltransferase 2 (433 aa).

Phosphoenolpyruvate is bound at residue 23–24; that stretch reads KN. Arg-96 serves as a coordination point for UDP-N-acetyl-alpha-D-glucosamine. The active-site Proton donor is the Cys-120. The residue at position 120 (Cys-120) is a 2-(S-cysteinyl)pyruvic acid O-phosphothioketal. UDP-N-acetyl-alpha-D-glucosamine contacts are provided by residues 125-129, Asp-308, and Val-330; that span reads RPIDL.

The protein belongs to the EPSP synthase family. MurA subfamily.

It localises to the cytoplasm. It catalyses the reaction phosphoenolpyruvate + UDP-N-acetyl-alpha-D-glucosamine = UDP-N-acetyl-3-O-(1-carboxyvinyl)-alpha-D-glucosamine + phosphate. It functions in the pathway cell wall biogenesis; peptidoglycan biosynthesis. In terms of biological role, cell wall formation. Adds enolpyruvyl to UDP-N-acetylglucosamine. In Enterococcus faecalis (strain ATCC 700802 / V583), this protein is UDP-N-acetylglucosamine 1-carboxyvinyltransferase 2.